Reading from the N-terminus, the 73-residue chain is Salivary thrombin inhibitor XC-42 (73 aa).

The first 23 residues, 1–23, serve as a signal peptide directing secretion; sequence MKLQFLFIFIAFCVMLFAQIATA.

As to quaternary structure, interacts with human F2 (thrombin). In terms of tissue distribution, salivary gland (at protein level).

It localises to the secreted. Its function is as follows. Acts as a competitive inhibitor of host thrombin. In Xenopsylla cheopis (Oriental rat flea), this protein is Salivary thrombin inhibitor XC-42.